The following is a 178-amino-acid chain: MENLARFLSTTLKQLRQQRGWSLSRLAEATGVSKAMLGQIERNESSPTVATLWKIATGLNVPFSTFISPPQSATPSVYDPQQQAMVITSLFPYDPQLCFEHFSIQMASGAISESTPHEKGVIEHVVVIDGQLDLCVDGEWQTLNCGEGVRFAADVTHIYRNGGEQTVHFHSLIHYPRS.

Residues 12–66 (LKQLRQQRGWSLSRLAEATGVSKAMLGQIERNESSPTVATLWKIATGLNVPFSTF) form the HTH cro/C1-type domain. Residues 23–42 (LSRLAEATGVSKAMLGQIER) constitute a DNA-binding region (H-T-H motif). The Cupin type-2 domain maps to 105 to 171 (QMASGAISES…GGEQTVHFHS (67 aa)).

In terms of biological role, regulates the expression of 12-16 transcription units involved in various steps of sulfur utilization. Represses expression of pfkB, fliZ, cysE, ydcO and its own expression. Activates expression of ypfN. Acts by binding to SutR boxes. This is HTH-type transcriptional regulator SutR from Escherichia coli (strain K12).